The primary structure comprises 230 residues: Ribosomal RNA small subunit methyltransferase G (230 aa).

S-adenosyl-L-methionine contacts are provided by residues G80, F85, 131–132 (VE), and R145.

The protein belongs to the methyltransferase superfamily. RNA methyltransferase RsmG family.

Its subcellular location is the cytoplasm. It catalyses the reaction guanosine(527) in 16S rRNA + S-adenosyl-L-methionine = N(7)-methylguanosine(527) in 16S rRNA + S-adenosyl-L-homocysteine. Its function is as follows. Specifically methylates the N7 position of guanine in position 527 of 16S rRNA. This chain is Ribosomal RNA small subunit methyltransferase G, found in Novosphingobium aromaticivorans (strain ATCC 700278 / DSM 12444 / CCUG 56034 / CIP 105152 / NBRC 16084 / F199).